We begin with the raw amino-acid sequence, 335 residues long: BTB and MATH domain-containing protein 39 (335 aa).

Residues 14 to 141 (MKTLCFKIMN…NGVFTIEFDL (128 aa)) form the MATH domain. The region spanning 161-226 (ADGKLIVEDQ…LQLDEFKVNV (66 aa)) is the BTB domain.

This chain is BTB and MATH domain-containing protein 39, found in Caenorhabditis briggsae.